Consider the following 223-residue polypeptide: Putative NAD(P)H nitroreductase SAB2397c (223 aa).

This sequence belongs to the nitroreductase family. Requires FMN as cofactor.

This chain is Putative NAD(P)H nitroreductase SAB2397c, found in Staphylococcus aureus (strain bovine RF122 / ET3-1).